Reading from the N-terminus, the 842-residue chain is DNA gyrase subunit A (842 aa).

Residues 42-511 enclose the Topo IIA-type catalytic domain; the sequence is LPEVRDGLKP…ADGEVSDEDL (470 aa). Y130 functions as the O-(5'-phospho-DNA)-tyrosine intermediate in the catalytic mechanism. A GyrA-box motif is present at residues 538 to 544; the sequence is QKRGGKG. The disordered stretch occupies residues 822-842; that stretch reads EDEAAESISESDADTAESPEA.

This sequence belongs to the type II topoisomerase GyrA/ParC subunit family. Heterotetramer, composed of two GyrA and two GyrB chains. In the heterotetramer, GyrA contains the active site tyrosine that forms a transient covalent intermediate with DNA, while GyrB binds cofactors and catalyzes ATP hydrolysis.

It localises to the cytoplasm. It catalyses the reaction ATP-dependent breakage, passage and rejoining of double-stranded DNA.. Its activity is regulated as follows. Inhibited by 4-quinoline drugs (nalidixic acid, ciprofloxacin, ofloxacin), although it is much less sensitive than the corresponding enzyme from E.coli. Its function is as follows. A type II topoisomerase that negatively supercoils closed circular double-stranded (ds) DNA in an ATP-dependent manner to modulate DNA topology and maintain chromosomes in an underwound state. Negative supercoiling favors strand separation, and DNA replication, transcription, recombination and repair, all of which involve strand separation. Also able to catalyze the interconversion of other topological isomers of dsDNA rings, including catenanes and knotted rings. Type II topoisomerases break and join 2 DNA strands simultaneously in an ATP-dependent manner. The polypeptide is DNA gyrase subunit A (Mycolicibacterium smegmatis (strain ATCC 700084 / mc(2)155) (Mycobacterium smegmatis)).